Here is a 126-residue protein sequence, read N- to C-terminus: Holo-[acyl-carrier-protein] synthase (126 aa).

Mg(2+)-binding residues include Asp-9 and Glu-58.

It belongs to the P-Pant transferase superfamily. AcpS family. Requires Mg(2+) as cofactor.

The protein resides in the cytoplasm. It catalyses the reaction apo-[ACP] + CoA = holo-[ACP] + adenosine 3',5'-bisphosphate + H(+). In terms of biological role, transfers the 4'-phosphopantetheine moiety from coenzyme A to a Ser of acyl-carrier-protein. The protein is Holo-[acyl-carrier-protein] synthase of Salmonella choleraesuis (strain SC-B67).